Consider the following 133-residue polypeptide: Aspartate 1-decarboxylase (133 aa).

Catalysis depends on S26, which acts as the Schiff-base intermediate with substrate; via pyruvic acid. The residue at position 26 (S26) is a Pyruvic acid (Ser). T58 is a substrate binding site. The Proton donor role is filled by Y59. 74 to 76 (GAA) serves as a coordination point for substrate.

The protein belongs to the PanD family. In terms of assembly, heterooctamer of four alpha and four beta subunits. The cofactor is pyruvate. Post-translationally, is synthesized initially as an inactive proenzyme, which is activated by self-cleavage at a specific serine bond to produce a beta-subunit with a hydroxyl group at its C-terminus and an alpha-subunit with a pyruvoyl group at its N-terminus.

The protein localises to the cytoplasm. The enzyme catalyses L-aspartate + H(+) = beta-alanine + CO2. The protein operates within cofactor biosynthesis; (R)-pantothenate biosynthesis; beta-alanine from L-aspartate: step 1/1. In terms of biological role, catalyzes the pyruvoyl-dependent decarboxylation of aspartate to produce beta-alanine. This chain is Aspartate 1-decarboxylase, found in Legionella pneumophila (strain Paris).